A 384-amino-acid polypeptide reads, in one-letter code: Thylakoid membrane protein TERC, chloroplastic (384 aa).

Residues 1 to 48 (MSLASVIHHGILPPAKSDRIFLTIPVFPPDFRARGWTKSPFSLLINPS) constitute a chloroplast transit peptide. Over 49-115 (LASAANRRLS…DYQQEETYKT (67 aa)) the chain is Stromal. The interval 68 to 104 (GIDQEDEEKESRELLPHKNDENATTSRSSSSVDSGGL) is disordered. Basic and acidic residues predominate over residues 76–88 (KESRELLPHKNDE). A helical transmembrane segment spans residues 116–136 (SFKTVALCVGTAVAFGIGIGL). At 137–145 (KEGVGKASE) the chain is on the lumenal, thylakoid side. A helical membrane pass occupies residues 146–166 (FFAGYILEQSLSVDNLFVFVL). At 167–180 (VFKYFKVPLMYQNK) the chain is on the stromal side. The helical transmembrane segment at 181-201 (VLTYGIAGAIVFRFTLILLGT) threads the bilayer. Over 202-206 (ATLQK) the chain is Lumenal, thylakoid. A helical transmembrane segment spans residues 207 to 227 (FEAVNLLLAAVLLYSSFKLFA). Residues 228 to 275 (SEEDDTDLSDNFIVKTCQRFIPVTSSYDGNRFFTKHDGILKATPLLLT) are Stromal-facing. Residues 276-296 (VAVIELSDIAFAVDSIPAVFG) form a helical membrane-spanning segment. Topologically, residues 297 to 301 (VTRDP) are lumenal, thylakoid. The helical transmembrane segment at 302–322 (FIVLTSNLFAILGLRSLYTLI) threads the bilayer. Over 323-335 (SEGMDELEYLQPS) the chain is Stromal. A helical transmembrane segment spans residues 336–356 (IAVVLGFIGVKMILDFFGFHI). Residue S357 is a topological domain, lumenal, thylakoid. A helical membrane pass occupies residues 358–378 (TEASLGVVALSLSTGVLLSLT). Residues 379–384 (NKSSDS) lie on the Stromal side of the membrane.

Interacts with ALB3. As to expression, expressed in roots, rosette and cauline leaves, stems and flowers.

The protein localises to the plastid. It localises to the chloroplast thylakoid membrane. Integral thylakoid membrane protein that plays a crucial role in thylakoid membrane biogenesis and thylakoid formation in early chloroplast development. Is essential for de novo synthesis of photosystem II (PSII) core proteins and required for efficient insertion of thylakoid membrane proteins, presumably via interaction with ALB3. May assist synthesis of thylakoid membrane proteins at the membrane insertion step. In Arabidopsis thaliana (Mouse-ear cress), this protein is Thylakoid membrane protein TERC, chloroplastic.